The following is a 630-amino-acid chain: 1-deoxy-D-xylulose-5-phosphate synthase (630 aa).

Thiamine diphosphate is bound by residues His74 and 115–117 (GHA). Asp146 contacts Mg(2+). Thiamine diphosphate is bound by residues 147–148 (AA), Asn175, Phe284, and Glu364. Asn175 serves as a coordination point for Mg(2+).

This sequence belongs to the transketolase family. DXPS subfamily. As to quaternary structure, homodimer. Mg(2+) serves as cofactor. The cofactor is thiamine diphosphate.

It carries out the reaction D-glyceraldehyde 3-phosphate + pyruvate + H(+) = 1-deoxy-D-xylulose 5-phosphate + CO2. It participates in metabolic intermediate biosynthesis; 1-deoxy-D-xylulose 5-phosphate biosynthesis; 1-deoxy-D-xylulose 5-phosphate from D-glyceraldehyde 3-phosphate and pyruvate: step 1/1. Its function is as follows. Catalyzes the acyloin condensation reaction between C atoms 2 and 3 of pyruvate and glyceraldehyde 3-phosphate to yield 1-deoxy-D-xylulose-5-phosphate (DXP). In Methylacidiphilum infernorum (isolate V4) (Methylokorus infernorum (strain V4)), this protein is 1-deoxy-D-xylulose-5-phosphate synthase.